A 139-amino-acid polypeptide reads, in one-letter code: 3-hydroxyacyl-[acyl-carrier-protein] dehydratase FabZ (139 aa).

His46 is a catalytic residue.

It belongs to the thioester dehydratase family. FabZ subfamily.

Its subcellular location is the cytoplasm. The catalysed reaction is a (3R)-hydroxyacyl-[ACP] = a (2E)-enoyl-[ACP] + H2O. Involved in unsaturated fatty acids biosynthesis. Catalyzes the dehydration of short chain beta-hydroxyacyl-ACPs and long chain saturated and unsaturated beta-hydroxyacyl-ACPs. The polypeptide is 3-hydroxyacyl-[acyl-carrier-protein] dehydratase FabZ (Petrotoga mobilis (strain DSM 10674 / SJ95)).